The chain runs to 388 residues: Succinate--CoA ligase [ADP-forming] subunit beta (388 aa).

The ATP-grasp domain maps to Lys9–Glu244. Residues Lys46, Gly53–Gly55, Glu99, Ala102, and Glu107 each bind ATP. Residues Asn199 and Asp213 each contribute to the Mg(2+) site. Substrate is bound by residues Asn264 and Gly321–Met323.

Belongs to the succinate/malate CoA ligase beta subunit family. In terms of assembly, heterotetramer of two alpha and two beta subunits. It depends on Mg(2+) as a cofactor.

It catalyses the reaction succinate + ATP + CoA = succinyl-CoA + ADP + phosphate. The enzyme catalyses GTP + succinate + CoA = succinyl-CoA + GDP + phosphate. It participates in carbohydrate metabolism; tricarboxylic acid cycle; succinate from succinyl-CoA (ligase route): step 1/1. In terms of biological role, succinyl-CoA synthetase functions in the citric acid cycle (TCA), coupling the hydrolysis of succinyl-CoA to the synthesis of either ATP or GTP and thus represents the only step of substrate-level phosphorylation in the TCA. The beta subunit provides nucleotide specificity of the enzyme and binds the substrate succinate, while the binding sites for coenzyme A and phosphate are found in the alpha subunit. The chain is Succinate--CoA ligase [ADP-forming] subunit beta from Burkholderia ambifaria (strain MC40-6).